We begin with the raw amino-acid sequence, 280 residues long: Clathrin adapter accessory protein LAA2 (280 aa).

The interval 1-26 (MSDRDQIEPVTNALDAESDSSDDFGN) is disordered. Positions 19–30 (DSSDDFGNFSDA) match the Ear-binding motif motif.

In terms of assembly, interacts with the clathrin-associated adapter complex AP-1. Interacts with LAA1.

Its subcellular location is the cytoplasmic vesicle. The protein resides in the clathrin-coated vesicle. Functionally, involved in localization of clathrin-associated adapter complex (AP-1) and subsequent AP-1-mediated clathrin-coated vesicle cargo loading. Directly mediates the interaction between LAA1 and AP-1 which is required for AP-1 localization. In complex with LAA1, cooperates with the small GTPase ARF1 and the phosphatidyl-inositol-4-phosphate (PI4P) synthesis to confer temporal specificity to AP-1 recruitment. The chain is Clathrin adapter accessory protein LAA2 from Saccharomyces cerevisiae (strain ATCC 204508 / S288c) (Baker's yeast).